A 520-amino-acid chain; its full sequence is AarF domain-containing protein kinase 1 (520 aa).

The 308-residue stretch at 148–455 (EFEKTPLGAA…GTHSSSSAFF (308 aa)) folds into the Protein kinase domain. Residues 154 to 162 (LGAASLAQV) and Lys-176 each bind ATP. Asp-308 (proton acceptor) is an active-site residue.

It belongs to the protein kinase superfamily. ADCK protein kinase family.

Its subcellular location is the mitochondrion. Functionally, appears to be essential for maintaining mitochondrial cristae formation and mitochondrial function by acting via YME1L1 in a kinase-independent manner to regulate essential mitochondrial structural proteins OPA1 and IMMT. The action of this enzyme is not yet clear. It is not known if it has protein kinase activity and what type of substrate it would phosphorylate (Ser, Thr or Tyr). The polypeptide is AarF domain-containing protein kinase 1 (adck1) (Xenopus laevis (African clawed frog)).